Consider the following 296-residue polypeptide: GTPase Era (296 aa).

Positions 3–170 (KSGFVTIVGR…KELMFKYIPE (168 aa)) constitute an Era-type G domain. Residues 11–18 (GRPNVGKS) are G1. 11 to 18 (GRPNVGKS) lines the GTP pocket. The segment at 37-41 (QTTRN) is G2. The G3 stretch occupies residues 58-61 (DTPG). GTP contacts are provided by residues 58-62 (DTPGI) and 120-123 (NKID). A G4 region spans residues 120-123 (NKID). The segment at 149–151 (ISA) is G5. The 78-residue stretch at 201–278 (LSEEVPHGIA…YIRLWVKVKE (78 aa)) folds into the KH type-2 domain.

It belongs to the TRAFAC class TrmE-Era-EngA-EngB-Septin-like GTPase superfamily. Era GTPase family. Monomer.

It is found in the cytoplasm. The protein resides in the cell membrane. In terms of biological role, an essential GTPase that binds both GDP and GTP, with rapid nucleotide exchange. Plays a role in 16S rRNA processing and 30S ribosomal subunit biogenesis and possibly also in cell cycle regulation and energy metabolism. In Clostridium botulinum (strain Okra / Type B1), this protein is GTPase Era.